A 184-amino-acid polypeptide reads, in one-letter code: Large ribosomal subunit protein uL5 (184 aa).

It belongs to the universal ribosomal protein uL5 family. In terms of assembly, component of the large ribosomal subunit. Interacts with Fmr1 to form the RNA-induced silencing complex (RISC), a ribonucleoprotein (RNP) complex involved in translation regulation, other components of the complex are RpL5, Rm62, AGO2 and Dcr-1.

It is found in the nucleus. Its subcellular location is the cytoplasm. In terms of biological role, component of the ribosome, a large ribonucleoprotein complex responsible for the synthesis of proteins in the cell. The small ribosomal subunit (SSU) binds messenger RNAs (mRNAs) and translates the encoded message by selecting cognate aminoacyl-transfer RNA (tRNA) molecules. The large subunit (LSU) contains the ribosomal catalytic site termed the peptidyl transferase center (PTC), which catalyzes the formation of peptide bonds, thereby polymerizing the amino acids delivered by tRNAs into a polypeptide chain. The nascent polypeptides leave the ribosome through a tunnel in the LSU and interact with protein factors that function in enzymatic processing, targeting, and the membrane insertion of nascent chains at the exit of the ribosomal tunnel. The protein is Large ribosomal subunit protein uL5 (RpL11) of Drosophila melanogaster (Fruit fly).